Here is a 269-residue protein sequence, read N- to C-terminus: Zinc transporter ZupT (269 aa).

8 helical membrane-spanning segments follow: residues 11–31, 40–60, 80–100, 125–145, 158–178, 187–207, 217–237, and 249–269; these read IALA…LLVL, LLAF…LSEI, YGTL…HFIP, ALLT…ATFF, AFAI…PVYF, FSAS…GYWL, FGWV…DELL, and TVYG…LFKW. Fe(2+) is bound by residues N136 and E139. The Zn(2+) site is built by E139 and H164. N165, E168, and E197 together coordinate Fe(2+). E168 serves as a coordination point for Zn(2+).

Belongs to the ZIP transporter (TC 2.A.5) family. ZupT subfamily.

It is found in the cell inner membrane. The enzyme catalyses Zn(2+)(in) = Zn(2+)(out). In terms of biological role, mediates zinc uptake. May also transport other divalent cations. The protein is Zinc transporter ZupT of Stenotrophomonas maltophilia (strain K279a).